We begin with the raw amino-acid sequence, 382 residues long: Telomere-binding protein OPG082 (382 aa).

This sequence belongs to the orthopoxvirus OPG082 family.

It localises to the virion. Functionally, binds to the hairpin form of the viral telomeric sequence. Might direct genome encapsidation into the virus particle. The protein is Telomere-binding protein OPG082 (OPG082) of Variola virus (isolate Human/India/Ind3/1967) (VARV).